Reading from the N-terminus, the 140-residue chain is ATP synthase epsilon chain (140 aa).

This sequence belongs to the ATPase epsilon chain family. F-type ATPases have 2 components, CF(1) - the catalytic core - and CF(0) - the membrane proton channel. CF(1) has five subunits: alpha(3), beta(3), gamma(1), delta(1), epsilon(1). CF(0) has three main subunits: a, b and c.

The protein resides in the cell inner membrane. Its function is as follows. Produces ATP from ADP in the presence of a proton gradient across the membrane. The polypeptide is ATP synthase epsilon chain (Colwellia maris).